A 218-amino-acid polypeptide reads, in one-letter code: 3-dehydroquinate dehydratase (218 aa).

3-dehydroquinate is bound by residues 29-31 (EFR) and arginine 56. Histidine 116 serves as the catalytic Proton donor/acceptor. Lysine 142 (schiff-base intermediate with substrate) is an active-site residue. 3-dehydroquinate is bound by residues arginine 180, serine 200, and glutamine 204.

It belongs to the type-I 3-dehydroquinase family. In terms of assembly, homodimer.

The enzyme catalyses 3-dehydroquinate = 3-dehydroshikimate + H2O. It participates in metabolic intermediate biosynthesis; chorismate biosynthesis; chorismate from D-erythrose 4-phosphate and phosphoenolpyruvate: step 3/7. Its function is as follows. Involved in the third step of the chorismate pathway, which leads to the biosynthesis of aromatic amino acids. Catalyzes the cis-dehydration of 3-dehydroquinate (DHQ) and introduces the first double bond of the aromatic ring to yield 3-dehydroshikimate. This chain is 3-dehydroquinate dehydratase, found in Methanococcus maripaludis (strain C6 / ATCC BAA-1332).